Here is a 228-residue protein sequence, read N- to C-terminus: Cytochrome c oxidase subunit 2 (228 aa).

Residues 1-26 lie on the Mitochondrial intermembrane side of the membrane; the sequence is MSTWANLGLQDSASPLMEQLIFFHDH. Residues 27 to 48 form a helical membrane-spanning segment; sequence ALLILVMITVLVGYLMFMLFFN. Residues 49-62 are Mitochondrial matrix-facing; the sequence is NYVNRFLLHGQLIE. A helical membrane pass occupies residues 63 to 82; sequence MIWTILPAIILLFIALPSLR. Residues 83–228 are Mitochondrial intermembrane-facing; that stretch reads LLYLLDEINE…FIKWISSNNS (146 aa). Residues His-161, Cys-196, Glu-198, Cys-200, His-204, and Met-207 each coordinate Cu cation. Glu-198 contributes to the Mg(2+) binding site.

This sequence belongs to the cytochrome c oxidase subunit 2 family. In terms of assembly, component of the cytochrome c oxidase (complex IV, CIV), a multisubunit enzyme composed of a catalytic core of 3 subunits and several supernumerary subunits. The complex exists as a monomer or a dimer and forms supercomplexes (SCs) in the inner mitochondrial membrane with ubiquinol-cytochrome c oxidoreductase (cytochrome b-c1 complex, complex III, CIII). Cu cation is required as a cofactor.

It localises to the mitochondrion inner membrane. It catalyses the reaction 4 Fe(II)-[cytochrome c] + O2 + 8 H(+)(in) = 4 Fe(III)-[cytochrome c] + 2 H2O + 4 H(+)(out). Component of the cytochrome c oxidase, the last enzyme in the mitochondrial electron transport chain which drives oxidative phosphorylation. The respiratory chain contains 3 multisubunit complexes succinate dehydrogenase (complex II, CII), ubiquinol-cytochrome c oxidoreductase (cytochrome b-c1 complex, complex III, CIII) and cytochrome c oxidase (complex IV, CIV), that cooperate to transfer electrons derived from NADH and succinate to molecular oxygen, creating an electrochemical gradient over the inner membrane that drives transmembrane transport and the ATP synthase. Cytochrome c oxidase is the component of the respiratory chain that catalyzes the reduction of oxygen to water. Electrons originating from reduced cytochrome c in the intermembrane space (IMS) are transferred via the dinuclear copper A center (CU(A)) of subunit 2 and heme A of subunit 1 to the active site in subunit 1, a binuclear center (BNC) formed by heme A3 and copper B (CU(B)). The BNC reduces molecular oxygen to 2 water molecules using 4 electrons from cytochrome c in the IMS and 4 protons from the mitochondrial matrix. The chain is Cytochrome c oxidase subunit 2 (mt:CoII) from Drosophila simulans (Fruit fly).